Here is a 372-residue protein sequence, read N- to C-terminus: MIFPISEIPDKVTHSILEGVSALQNMSHTAFWSTVLGFLVVARIAVILATPKRRVLDIKGKKVVISGGSQGAGAALAELCYTKGANVVIVSRTVSKLEAQVQKIVTKHEPVFEGQTIRYISADLTKEEEAIRVFSEETMPAPPDVIFSCAGAAETGFILDFKASQLARAFSTNYLSALFFVHAGTTRMAKEPISPKNPRYVAIFSSVLAFYPLLGYGQYCASKAAVRSLIDSLRVEALPFNIRVVGVFPGNFQSEGFEEENKSKPEITRQIEGPSQAISAEECAKIVFAQMEKGGQMITTDLIGWILQSIALSSSPRSFSLLQIPLAIFMCIFSPVWNAFVNRDVRKYFHANTEYVTRHQRGGVGSENPTPQ.

An NADP(+)-binding site is contributed by Val64. NADPH is bound by residues Gly67, Ser69, Gly71, Arg92, Lys96, Asp123, and Leu124. Residues 67–71 (GGSQG) carry the GXSXG motif. Asp123 provides a ligand contact to NADP(+). Residue Ser205 is the Proton donor of the active site. Positions 219, 223, and 254 each coordinate NADP(+). Tyr219 functions as the Proton acceptor in the catalytic mechanism. Lys223 (lowers pKa of active site Tyr) is an active-site residue. Residues 321–341 (LLQIPLAIFMCIFSPVWNAFV) traverse the membrane as a helical segment.

It belongs to the short-chain dehydrogenases/reductases (SDR) family.

It localises to the endoplasmic reticulum membrane. The enzyme catalyses sphinganine + NADP(+) = 3-oxosphinganine + NADPH + H(+). It participates in lipid metabolism; sphingolipid metabolism. Its function is as follows. Catalyzes the reduction of 3'-oxosphinganine (3-ketodihydrosphingosine/KDS) to sphinganine (dihydrosphingosine/DHS), the second step of de novo sphingolipid biosynthesis. In Yarrowia lipolytica (strain CLIB 122 / E 150) (Yeast), this protein is 3-ketodihydrosphingosine reductase TSC10 (TSC10).